A 229-amino-acid chain; its full sequence is Large ribosomal subunit protein uL1 (229 aa).

Belongs to the universal ribosomal protein uL1 family. In terms of assembly, part of the 50S ribosomal subunit.

Its function is as follows. Binds directly to 23S rRNA. The L1 stalk is quite mobile in the ribosome, and is involved in E site tRNA release. Protein L1 is also a translational repressor protein, it controls the translation of the L11 operon by binding to its mRNA. The protein is Large ribosomal subunit protein uL1 of Histophilus somni (strain 129Pt) (Haemophilus somnus).